The following is a 295-amino-acid chain: Elongation factor Ts (295 aa).

The involved in Mg(2+) ion dislocation from EF-Tu stretch occupies residues 80 to 83 (TDFV).

The protein belongs to the EF-Ts family.

It is found in the cytoplasm. Functionally, associates with the EF-Tu.GDP complex and induces the exchange of GDP to GTP. It remains bound to the aminoacyl-tRNA.EF-Tu.GTP complex up to the GTP hydrolysis stage on the ribosome. The protein is Elongation factor Ts of Lysinibacillus sphaericus (strain C3-41).